The chain runs to 419 residues: NFATC2-interacting protein (419 aa).

2 disordered regions span residues 1-131 (MAEP…GKVK) and 151-215 (DEEE…HTRA). Positions 11–27 (WSGGSGAGRGGRGGWGG) are enriched in gly residues. Positions 35–51 (QRSPSRGTLDVVSVDLV) are enriched in low complexity. A phosphoserine mark is found at serine 54, serine 84, serine 88, serine 90, serine 92, and serine 127. Residues lysine 129 and lysine 131 each participate in a glycyl lysine isopeptide (Lys-Gly) (interchain with G-Cter in SUMO2) cross-link. Over residues 180–192 (RTKDKEEKKKTEF) the composition is skewed to basic and acidic residues. Residues serine 198, serine 201, serine 204, serine 220, and serine 314 each carry the phosphoserine modification. Residues 209 to 231 (SRTHTRALKKLSEVNKRLQDLRS) adopt a coiled-coil conformation. 2 positions are modified to phosphothreonine: threonine 316 and threonine 318. A Ubiquitin-like domain is found at 348–419 (LQLRVQGKEK…ESGDLIEVWG (72 aa)). Residues serine 369 and serine 390 each carry the phosphoserine modification.

In terms of assembly, interacts with NFATC2, TRAF1, TRAF2 and PRMT1. Interacts with UBE2I/UBC9. Methylation at the N-terminus by PRMT1 modulates interaction with the NFAT complex and results in augmented cytokine production.

The protein localises to the nucleus. The protein resides in the cytoplasm. In terms of biological role, in T-helper 2 (Th2) cells, regulates the magnitude of NFAT-driven transcription of a specific subset of cytokine genes, including IL3, IL4, IL5 and IL13, but not IL2. Recruits PRMT1 to the IL4 promoter; this leads to enhancement of histone H4 'Arg-3'-methylation and facilitates subsequent histone acetylation at the IL4 locus, thus promotes robust cytokine expression. Down-regulates formation of poly-SUMO chains by UBE2I/UBC9. This chain is NFATC2-interacting protein (NFATC2IP), found in Homo sapiens (Human).